The sequence spans 321 residues: Cytochrome f (321 aa).

An N-terminal signal peptide occupies residues 1–35; sequence MQNRKTYDDWVKKWITQSISVLIMIDIMTRTSIAN. Tyrosine 37, cysteine 57, cysteine 60, and histidine 61 together coordinate heme. A helical membrane pass occupies residues 287-307; the sequence is VQGLLLFLASVVLAQIFLVLK.

It belongs to the cytochrome f family. The 4 large subunits of the cytochrome b6-f complex are cytochrome b6, subunit IV (17 kDa polypeptide, petD), cytochrome f and the Rieske protein, while the 4 small subunits are PetG, PetL, PetM and PetN. The complex functions as a dimer. The cofactor is heme.

The protein localises to the plastid. Its subcellular location is the chloroplast thylakoid membrane. In terms of biological role, component of the cytochrome b6-f complex, which mediates electron transfer between photosystem II (PSII) and photosystem I (PSI), cyclic electron flow around PSI, and state transitions. This Cryptomeria japonica (Japanese cedar) protein is Cytochrome f.